A 279-amino-acid chain; its full sequence is 1D-myo-inositol 2-acetamido-2-deoxy-alpha-D-glucopyranoside deacetylase (279 aa).

Zn(2+) contacts are provided by H12, D15, and H146.

The protein belongs to the MshB deacetylase family. Zn(2+) is required as a cofactor.

The catalysed reaction is 1D-myo-inositol 2-acetamido-2-deoxy-alpha-D-glucopyranoside + H2O = 1D-myo-inositol 2-amino-2-deoxy-alpha-D-glucopyranoside + acetate. Catalyzes the deacetylation of 1D-myo-inositol 2-acetamido-2-deoxy-alpha-D-glucopyranoside (GlcNAc-Ins) in the mycothiol biosynthesis pathway. The chain is 1D-myo-inositol 2-acetamido-2-deoxy-alpha-D-glucopyranoside deacetylase from Mycobacteroides abscessus (strain ATCC 19977 / DSM 44196 / CCUG 20993 / CIP 104536 / JCM 13569 / NCTC 13031 / TMC 1543 / L948) (Mycobacterium abscessus).